Here is a 200-residue protein sequence, read N- to C-terminus: Recombination protein RecR (200 aa).

Residues Cys59 to Cys74 form a C4-type zinc finger. Residues Ala82–Pro177 enclose the Toprim domain.

This sequence belongs to the RecR family.

Its function is as follows. May play a role in DNA repair. It seems to be involved in an RecBC-independent recombinational process of DNA repair. It may act with RecF and RecO. The polypeptide is Recombination protein RecR (Burkholderia mallei (strain NCTC 10247)).